The primary structure comprises 276 residues: ADP-dependent (S)-NAD(P)H-hydrate dehydratase (276 aa).

Residues 7–275 (TEEHVRATLP…DILPRVWKRF (269 aa)) form the YjeF C-terminal domain. Residues Ala-42, Gly-104, and His-149 each coordinate (6S)-NADPHX. Residues 186-190 (KGNQT) and Gly-215 contribute to the AMP site. Position 216 (Asp-216) interacts with (6S)-NADPHX.

It belongs to the NnrD/CARKD family. As to quaternary structure, homotetramer. It depends on Mg(2+) as a cofactor.

It carries out the reaction (6S)-NADHX + ADP = AMP + phosphate + NADH + H(+). It catalyses the reaction (6S)-NADPHX + ADP = AMP + phosphate + NADPH + H(+). Its function is as follows. Catalyzes the dehydration of the S-form of NAD(P)HX at the expense of ADP, which is converted to AMP. Together with NAD(P)HX epimerase, which catalyzes the epimerization of the S- and R-forms, the enzyme allows the repair of both epimers of NAD(P)HX, a damaged form of NAD(P)H that is a result of enzymatic or heat-dependent hydration. This chain is ADP-dependent (S)-NAD(P)H-hydrate dehydratase, found in Bacillus subtilis (strain 168).